The chain runs to 113 residues: MVRDIGLRIQPPAEKCDDPKCPWHGHLKIHGRVFEGIVVSDKPRKTVTVERQYYHYLKKYERYELRRSRIHAHNPPCINAKVGDRVLIAETRPLSKTKHFVVVAVLERAEERR.

It belongs to the universal ribosomal protein uS17 family. In terms of assembly, part of the 30S ribosomal subunit.

Functionally, one of the primary rRNA binding proteins, it binds specifically to the 5'-end of 16S ribosomal RNA. In Pyrococcus abyssi (strain GE5 / Orsay), this protein is Small ribosomal subunit protein uS17.